Reading from the N-terminus, the 403-residue chain is MQSIKRTLLLLGALLPAALAAPAREPHPSSNIIPGKYIITFKSGIDTAAIESHTAWASNIHKRNLERRGLVGGEFPAGIERKFKIKDFAAYAGSFDPATIEEIRNSEDVAHVEEDQIWYLDALTTQSGAPWGLGSISHKGQASTNYVYDTSAGAGTYAYVVDSGINVDHIEFQGRATKAYNAVGGDHVDTLGHGTHVAGTIGGKTYGVAKQTNLLSVKVFEGRTGSTSVILDGFNWAANDIVSKGRKGKAAINMSLGGGYSYAFNNAVESAYEQGVLSVVAAGNEGVDASNSSPASAPNALTVGATNKSNARASFSNYGKVLDIFAPGQDILSAWIGSTTATNTISGTSMATPHVVGLAVYLMGLEGVSGPAAVTQRILQLATSGVISDVKGSPNKLAYNGAA.

Residues 1–21 form the signal peptide; it reads MQSIKRTLLLLGALLPAALAA. Residues 22–125 constitute a propeptide that is removed on maturation; it reads PAREPHPSSN…QIWYLDALTT (104 aa). The Inhibitor I9 domain occupies 36-120; the sequence is KYIITFKSGI…HVEEDQIWYL (85 aa). The Peptidase S8 domain occupies 130–403; the sequence is PWGLGSISHK…PNKLAYNGAA (274 aa). Active-site charge relay system residues include Asp162 and His193. N-linked (GlcNAc...) asparagine glycosylation is found at Asn253 and Asn307. Residue Ser349 is the Charge relay system of the active site.

It belongs to the peptidase S8 family.

It localises to the secreted. It catalyses the reaction Hydrolysis of proteins with broad specificity, and of Bz-Arg-OEt &gt; Ac-Tyr-OEt. Does not hydrolyze peptide amides.. Its function is as follows. Secreted alkaline protease that allows assimilation of proteinaceous substrates. This is Alkaline protease 1 (alp1) from Aspergillus clavatus (strain ATCC 1007 / CBS 513.65 / DSM 816 / NCTC 3887 / NRRL 1 / QM 1276 / 107).